The sequence spans 302 residues: MKKKDFVSITDCSKQDILHLIERSAYFERNLNQLLLKDKICATLFFEPSTRTRLSFETAINRLNGRIIGFSDVHTTSSSKGETLKDTIKIVSNYADVIIMRHYLEGAARYASKITDVPIVNAGDGANQHPSQTLLDIYSMYKTQGTLYNLTITIVGDLKYGRTVHSLLNGMSYFNPTFHFIAPEELKLPIIYKQFMDENSIQYFDHSDFLVDIINQSDILYMTRVQRERFNDLIEYEKVKNVYVLSNDMLADSKDNLRILHPLPRVGEITSDVDTNPKAYYFEQARNGIFARQAIICDVLGL.

2 residues coordinate carbamoyl phosphate: R51 and T52. K80 is an L-aspartate binding site. The carbamoyl phosphate site is built by R101, H129, and Q132. 2 residues coordinate L-aspartate: R162 and R224. 2 residues coordinate carbamoyl phosphate: L263 and P264.

Belongs to the aspartate/ornithine carbamoyltransferase superfamily. ATCase family. In terms of assembly, heterododecamer (2C3:3R2) of six catalytic PyrB chains organized as two trimers (C3), and six regulatory PyrI chains organized as three dimers (R2).

It catalyses the reaction carbamoyl phosphate + L-aspartate = N-carbamoyl-L-aspartate + phosphate + H(+). It functions in the pathway pyrimidine metabolism; UMP biosynthesis via de novo pathway; (S)-dihydroorotate from bicarbonate: step 2/3. In terms of biological role, catalyzes the condensation of carbamoyl phosphate and aspartate to form carbamoyl aspartate and inorganic phosphate, the committed step in the de novo pyrimidine nucleotide biosynthesis pathway. The sequence is that of Aspartate carbamoyltransferase catalytic subunit from Azobacteroides pseudotrichonymphae genomovar. CFP2.